Consider the following 131-residue polypeptide: L-ectoine synthase (131 aa).

It belongs to the ectoine synthase family.

It carries out the reaction (2S)-4-acetamido-2-aminobutanoate = L-ectoine + H2O. Its pathway is amine and polyamine biosynthesis; ectoine biosynthesis; L-ectoine from L-aspartate 4-semialdehyde: step 3/3. Its function is as follows. Catalyzes the circularization of gamma-N-acetyl-alpha,gamma-diaminobutyric acid (ADABA) to ectoine (1,4,5,6-tetrahydro-2-methyl-4-pyrimidine carboxylic acid), which is an excellent osmoprotectant. The polypeptide is L-ectoine synthase (Wolinella succinogenes (strain ATCC 29543 / DSM 1740 / CCUG 13145 / JCM 31913 / LMG 7466 / NCTC 11488 / FDC 602W) (Vibrio succinogenes)).